The primary structure comprises 49 residues: Large ribosomal subunit protein bL33 (49 aa).

The protein belongs to the bacterial ribosomal protein bL33 family.

This chain is Large ribosomal subunit protein bL33, found in Finegoldia magna (strain ATCC 29328 / DSM 20472 / WAL 2508) (Peptostreptococcus magnus).